The chain runs to 429 residues: 4-hydroxy-3-methylbut-2-en-1-yl diphosphate synthase (flavodoxin) (429 aa).

[4Fe-4S] cluster-binding residues include Cys323, Cys326, Cys369, and Glu376.

This sequence belongs to the IspG family. Requires [4Fe-4S] cluster as cofactor.

It carries out the reaction (2E)-4-hydroxy-3-methylbut-2-enyl diphosphate + oxidized [flavodoxin] + H2O + 2 H(+) = 2-C-methyl-D-erythritol 2,4-cyclic diphosphate + reduced [flavodoxin]. Its pathway is isoprenoid biosynthesis; isopentenyl diphosphate biosynthesis via DXP pathway; isopentenyl diphosphate from 1-deoxy-D-xylulose 5-phosphate: step 5/6. In terms of biological role, converts 2C-methyl-D-erythritol 2,4-cyclodiphosphate (ME-2,4cPP) into 1-hydroxy-2-methyl-2-(E)-butenyl 4-diphosphate. This chain is 4-hydroxy-3-methylbut-2-en-1-yl diphosphate synthase (flavodoxin), found in Wolbachia sp. subsp. Brugia malayi (strain TRS).